Consider the following 101-residue polypeptide: Protein SPIRAL1-like 3 (101 aa).

The segment covering Met1–Glu22 has biased composition (gly residues). 2 disordered regions span residues Met1 to Ser54 and Thr73 to Lys101.

This sequence belongs to the SPIRAL1 family.

In terms of biological role, acts in maintaining the cortical microtubules organization essential for anisotropic cell growth. The sequence is that of Protein SPIRAL1-like 3 from Oryza sativa subsp. japonica (Rice).